Consider the following 207-residue polypeptide: Large ribosomal subunit protein uL4 (207 aa).

The disordered stretch occupies residues 49 to 73 (AKKRGEVSGGGKKPWKQKGGGRARA).

The protein belongs to the universal ribosomal protein uL4 family. In terms of assembly, part of the 50S ribosomal subunit.

Functionally, one of the primary rRNA binding proteins, this protein initially binds near the 5'-end of the 23S rRNA. It is important during the early stages of 50S assembly. It makes multiple contacts with different domains of the 23S rRNA in the assembled 50S subunit and ribosome. In terms of biological role, forms part of the polypeptide exit tunnel. This chain is Large ribosomal subunit protein uL4, found in Helicobacter hepaticus (strain ATCC 51449 / 3B1).